Consider the following 215-residue polypeptide: Peroxiredoxin 1 (215 aa).

The Thioredoxin domain occupies 2–157 (KLLGEKFPSM…ILRALKALQT (156 aa)). C44 acts as the Cysteine sulfenic acid (-SOH) intermediate in catalysis. R120 is a binding site for substrate.

It belongs to the peroxiredoxin family. Prx6 subfamily. Homodecamer. Pentamer of dimers that assemble into a ring structure.

The protein localises to the cytoplasm. It catalyses the reaction a hydroperoxide + [thioredoxin]-dithiol = an alcohol + [thioredoxin]-disulfide + H2O. Its function is as follows. Thiol-specific peroxidase that catalyzes the reduction of hydrogen peroxide and organic hydroperoxides to water and alcohols, respectively. Plays a role in cell protection against oxidative stress by detoxifying peroxides. The protein is Peroxiredoxin 1 of Caldanaerobacter subterraneus subsp. tengcongensis (strain DSM 15242 / JCM 11007 / NBRC 100824 / MB4) (Thermoanaerobacter tengcongensis).